We begin with the raw amino-acid sequence, 272 residues long: Putative phosphoenolpyruvate synthase regulatory protein (272 aa).

152–159 provides a ligand contact to ADP; the sequence is GVSRCGKT.

Belongs to the pyruvate, phosphate/water dikinase regulatory protein family. PSRP subfamily.

It carries out the reaction [pyruvate, water dikinase] + ADP = [pyruvate, water dikinase]-phosphate + AMP + H(+). It catalyses the reaction [pyruvate, water dikinase]-phosphate + phosphate + H(+) = [pyruvate, water dikinase] + diphosphate. In terms of biological role, bifunctional serine/threonine kinase and phosphorylase involved in the regulation of the phosphoenolpyruvate synthase (PEPS) by catalyzing its phosphorylation/dephosphorylation. The protein is Putative phosphoenolpyruvate synthase regulatory protein of Pseudomonas putida (strain GB-1).